The chain runs to 301 residues: Acetyl-coenzyme A carboxylase carboxyl transferase subunit beta (301 aa).

The region spanning 25–294 (LWIKCPETGE…SAANDMNSGA (270 aa)) is the CoA carboxyltransferase N-terminal domain.

The protein belongs to the AccD/PCCB family. Acetyl-CoA carboxylase is a heterohexamer composed of biotin carboxyl carrier protein (AccB), biotin carboxylase (AccC) and two subunits each of ACCase subunit alpha (AccA) and ACCase subunit beta (AccD).

It localises to the cytoplasm. The enzyme catalyses N(6)-carboxybiotinyl-L-lysyl-[protein] + acetyl-CoA = N(6)-biotinyl-L-lysyl-[protein] + malonyl-CoA. Its pathway is lipid metabolism; malonyl-CoA biosynthesis; malonyl-CoA from acetyl-CoA: step 1/1. In terms of biological role, component of the acetyl coenzyme A carboxylase (ACC) complex. Biotin carboxylase (BC) catalyzes the carboxylation of biotin on its carrier protein (BCCP) and then the CO(2) group is transferred by the transcarboxylase to acetyl-CoA to form malonyl-CoA. The sequence is that of Acetyl-coenzyme A carboxylase carboxyl transferase subunit beta from Rhizobium leguminosarum bv. trifolii (strain WSM1325).